We begin with the raw amino-acid sequence, 206 residues long: Small ribosomal subunit protein uS4 (206 aa).

The S4 RNA-binding domain maps to 96–156 (NRLDNVTYRI…KNSKLQSRIK (61 aa)).

It belongs to the universal ribosomal protein uS4 family. Part of the 30S ribosomal subunit. Contacts protein S5. The interaction surface between S4 and S5 is involved in control of translational fidelity.

Its function is as follows. One of the primary rRNA binding proteins, it binds directly to 16S rRNA where it nucleates assembly of the body of the 30S subunit. In terms of biological role, with S5 and S12 plays an important role in translational accuracy. The protein is Small ribosomal subunit protein uS4 of Buchnera aphidicola subsp. Baizongia pistaciae (strain Bp).